The primary structure comprises 734 residues: Photosystem I P700 chlorophyll a apoprotein A2 (734 aa).

Helical transmembrane passes span 46–69 (IFASHFGQLAIIFLWTSGNLFHVA), 135–158 (LYTGAIFLLAVAALFLLASWLHLQ), 175–199 (LNHHLSGLFGVSSLAWTGHLIHVAI), 273–291 (MAHHHLAIAVVFIIAGHMY), 330–353 (LHFQLGLALAALGVITSLVAQHMY), 369–395 (AALYTHHQYIAGFIMAGAFAHGAIFFL), 417–439 (AIISHLSWASLFLGFHTLGLYVH), and 517–535 (FLVHHAIALGLHTTTLILV). Residues cysteine 559 and cysteine 568 each coordinate [4Fe-4S] cluster. Transmembrane regions (helical) follow at residues 575 to 596 (AFYLAVFWMLNTIGWVTFYWHW) and 643 to 665 (LSVWAWMFLFGHLVWATGFMFLI). Chlorophyll a contacts are provided by histidine 654, methionine 662, and tyrosine 670. Position 671 (tryptophan 671) interacts with phylloquinone. A helical transmembrane segment spans residues 707-727 (LVGLAHFSVGYIFTYAAFLIA).

It belongs to the PsaA/PsaB family. As to quaternary structure, the PsaA/B heterodimer binds the P700 chlorophyll special pair and subsequent electron acceptors. PSI consists of a core antenna complex that captures photons, and an electron transfer chain that converts photonic excitation into a charge separation. The eukaryotic PSI reaction center is composed of at least 11 subunits. Requires P700 is a chlorophyll a/chlorophyll a' dimer, A0 is one or more chlorophyll a, A1 is one or both phylloquinones and FX is a shared 4Fe-4S iron-sulfur center. as cofactor.

It localises to the plastid. The protein localises to the chloroplast thylakoid membrane. It carries out the reaction reduced [plastocyanin] + hnu + oxidized [2Fe-2S]-[ferredoxin] = oxidized [plastocyanin] + reduced [2Fe-2S]-[ferredoxin]. Its function is as follows. PsaA and PsaB bind P700, the primary electron donor of photosystem I (PSI), as well as the electron acceptors A0, A1 and FX. PSI is a plastocyanin-ferredoxin oxidoreductase, converting photonic excitation into a charge separation, which transfers an electron from the donor P700 chlorophyll pair to the spectroscopically characterized acceptors A0, A1, FX, FA and FB in turn. Oxidized P700 is reduced on the lumenal side of the thylakoid membrane by plastocyanin. This is Photosystem I P700 chlorophyll a apoprotein A2 from Adiantum capillus-veneris (Maidenhair fern).